Reading from the N-terminus, the 206-residue chain is MLLSAIHFYGLLLACTFTRSYSAFKNDATEILYSHVVKPAPASPSSNSTLNQARNGGRHYAGTGSDRNNRVQVGCRELRSTKYISDGQCTSINPLKELVCAGECLPLPLLPNWIGGGYGTKYWSRRSSQEWRCVNDKTRTQRIQLQCQDGSIRTYKITVVTACKCKRYTRQHNESSHNFEGTSQAKPVQHHKERKRASKSSKHSTS.

Positions 1-22 are cleaved as a signal peptide; it reads MLLSAIHFYGLLLACTFTRSYS. The interval 40 to 68 is disordered; sequence APASPSSNSTLNQARNGGRHYAGTGSDRN. The span at 43-54 shows a compositional bias: polar residues; sequence SPSSNSTLNQAR. Asn47 is a glycosylation site (N-linked (GlcNAc...) asparagine). Cystine bridges form between Cys75-Cys133, Cys89-Cys147, Cys100-Cys163, and Cys104-Cys165. Residues 75-170 form the CTCK domain; sequence CRELRSTKYI…TACKCKRYTR (96 aa). Asn173 carries N-linked (GlcNAc...) asparagine glycosylation. The interval 176-206 is disordered; the sequence is SHNFEGTSQAKPVQHHKERKRASKSSKHSTS. The segment covering 188-206 has biased composition (basic residues); that stretch reads VQHHKERKRASKSSKHSTS.

It belongs to the sclerostin family. In terms of assembly, interacts with LRP6.

It localises to the secreted. Functionally, can activate or inhibit Wnt signaling in a context-dependent manner. Activates the canonical Wnt pathway whereby acts through Disheveled proteins and beta-catenin. Antagonises Wnt signaling through the canonical pathways presumably by blocking accessibility of certain WNTs to their receptors. Induces posterior neural markers via components of the canonical Wnt pathway. In Gallus gallus (Chicken), this protein is Sclerostin domain-containing protein 1 (SOSTDC1).